Here is a 344-residue protein sequence, read N- to C-terminus: Anthranilate phosphoribosyltransferase (344 aa).

Residues Gly81, Gly84 to Asp85, Ser89, Asn91 to Thr94, Lys109 to Ser117, and Ala121 each bind 5-phospho-alpha-D-ribose 1-diphosphate. An anthranilate-binding site is contributed by Gly81. Ser93 is a binding site for Mg(2+). Asn112 contributes to the anthranilate binding site. Residue Arg167 coordinates anthranilate. Positions 226 and 227 each coordinate Mg(2+).

Belongs to the anthranilate phosphoribosyltransferase family. In terms of assembly, homodimer. Mg(2+) serves as cofactor.

The enzyme catalyses N-(5-phospho-beta-D-ribosyl)anthranilate + diphosphate = 5-phospho-alpha-D-ribose 1-diphosphate + anthranilate. The protein operates within amino-acid biosynthesis; L-tryptophan biosynthesis; L-tryptophan from chorismate: step 2/5. Catalyzes the transfer of the phosphoribosyl group of 5-phosphorylribose-1-pyrophosphate (PRPP) to anthranilate to yield N-(5'-phosphoribosyl)-anthranilate (PRA). The sequence is that of Anthranilate phosphoribosyltransferase from Xanthobacter autotrophicus (strain ATCC BAA-1158 / Py2).